The chain runs to 274 residues: S-adenosylmethionine decarboxylase proenzyme (274 aa).

Catalysis depends on Ser-119, which acts as the Schiff-base intermediate with substrate; via pyruvic acid. Position 119 is a pyruvic acid (Ser); by autocatalysis (Ser-119). His-124 serves as the catalytic Proton acceptor; for processing activity. Residue Cys-147 is the Proton donor; for catalytic activity of the active site.

It belongs to the prokaryotic AdoMetDC family. Type 2 subfamily. In terms of assembly, heterooctamer of four alpha and four beta chains arranged as a tetramer of alpha/beta heterodimers. Pyruvate is required as a cofactor. In terms of processing, is synthesized initially as an inactive proenzyme. Formation of the active enzyme involves a self-maturation process in which the active site pyruvoyl group is generated from an internal serine residue via an autocatalytic post-translational modification. Two non-identical subunits are generated from the proenzyme in this reaction, and the pyruvate is formed at the N-terminus of the alpha chain, which is derived from the carboxyl end of the proenzyme. The post-translation cleavage follows an unusual pathway, termed non-hydrolytic serinolysis, in which the side chain hydroxyl group of the serine supplies its oxygen atom to form the C-terminus of the beta chain, while the remainder of the serine residue undergoes an oxidative deamination to produce ammonia and the pyruvoyl group blocking the N-terminus of the alpha chain.

The enzyme catalyses S-adenosyl-L-methionine + H(+) = S-adenosyl 3-(methylsulfanyl)propylamine + CO2. It participates in amine and polyamine biosynthesis; S-adenosylmethioninamine biosynthesis; S-adenosylmethioninamine from S-adenosyl-L-methionine: step 1/1. Catalyzes the decarboxylation of S-adenosylmethionine to S-adenosylmethioninamine (dcAdoMet), the propylamine donor required for the synthesis of the polyamines spermine and spermidine from the diamine putrescine. The protein is S-adenosylmethionine decarboxylase proenzyme of Clostridium acetobutylicum (strain ATCC 824 / DSM 792 / JCM 1419 / IAM 19013 / LMG 5710 / NBRC 13948 / NRRL B-527 / VKM B-1787 / 2291 / W).